Here is a 204-residue protein sequence, read N- to C-terminus: MSMRLSIRTLIILAHVCLFITTTTIAQFVLDTVGEPVEGDEEYFIRPVITNKGGRSTMVSRNESCPLHVGLELTGLGRGLVVKFTPFAPHHDFDDVRVNRDLRITFQASSSCVQSTEWRLGEKDTKSGRRLIITGTDSATNGSYGNFFRIVETPLEGMYNIQWCPTEVCPSCKFECGTVDMLNENGKILLALDGGPLPLVFQKE.

The signal sequence occupies residues 1–26 (MSMRLSIRTLIILAHVCLFITTTTIA). Residue Asn62 is glycosylated (N-linked (GlcNAc...) asparagine). A disulfide bond links Cys65 and Cys112. A glycan (N-linked (GlcNAc...) asparagine) is linked at Asn141. 2 disulfides stabilise this stretch: Cys164–Cys176 and Cys169–Cys172.

It belongs to the protease inhibitor I3 (leguminous Kunitz-type inhibitor) family. As to quaternary structure, interacts with SCP1 and CP. In terms of tissue distribution, expressed at low levels in non-mycorrhizal roots.

Its subcellular location is the secreted. It localises to the extracellular space. The protein localises to the apoplast. Functionally, protease inhibitor that, together with SCP1, controls mycorrhiza establishment and arbuscule development during root colonization by arbuscular mycorrhizal (AM) fungi (e.g. Rhizophagus irregularis), probably by degrading SCP1 in the apoplast of the periarbuscular region. This Medicago truncatula (Barrel medic) protein is Kunitz type trypsin inhibitor 106.